The sequence spans 462 residues: uncharacterized protein (462 aa).

The 59-residue stretch at 12–70 folds into the TRAM domain; the sequence is MLKKNDIIQVAISDLSHEGAGVAKHDGFVFFVDNALPEEVIDMRVLKVNKNSGFGKVEA. Glutamine 294, tyrosine 323, glutamate 344, and aspartate 392 together coordinate S-adenosyl-L-methionine. The active-site Nucleophile is cysteine 419.

Belongs to the class I-like SAM-binding methyltransferase superfamily. RNA M5U methyltransferase family.

This is an uncharacterized protein from Streptococcus pyogenes serotype M18 (strain MGAS8232).